A 249-amino-acid polypeptide reads, in one-letter code: 3-deoxy-manno-octulosonate cytidylyltransferase (249 aa).

This sequence belongs to the KdsB family.

The protein resides in the cytoplasm. The catalysed reaction is 3-deoxy-alpha-D-manno-oct-2-ulosonate + CTP = CMP-3-deoxy-beta-D-manno-octulosonate + diphosphate. Its pathway is nucleotide-sugar biosynthesis; CMP-3-deoxy-D-manno-octulosonate biosynthesis; CMP-3-deoxy-D-manno-octulosonate from 3-deoxy-D-manno-octulosonate and CTP: step 1/1. It functions in the pathway bacterial outer membrane biogenesis; lipopolysaccharide biosynthesis. Its function is as follows. Activates KDO (a required 8-carbon sugar) for incorporation into bacterial lipopolysaccharide in Gram-negative bacteria. This chain is 3-deoxy-manno-octulosonate cytidylyltransferase, found in Coxiella burnetii (strain RSA 331 / Henzerling II).